The chain runs to 364 residues: Chorismate synthase (364 aa).

R47 contacts NADP(+). Residues 125–127 (RFS), G285, 300–304 (KPTPS), and R327 contribute to the FMN site.

This sequence belongs to the chorismate synthase family. Homotetramer. Requires FMNH2 as cofactor.

The enzyme catalyses 5-O-(1-carboxyvinyl)-3-phosphoshikimate = chorismate + phosphate. It functions in the pathway metabolic intermediate biosynthesis; chorismate biosynthesis; chorismate from D-erythrose 4-phosphate and phosphoenolpyruvate: step 7/7. Its function is as follows. Catalyzes the anti-1,4-elimination of the C-3 phosphate and the C-6 proR hydrogen from 5-enolpyruvylshikimate-3-phosphate (EPSP) to yield chorismate, which is the branch point compound that serves as the starting substrate for the three terminal pathways of aromatic amino acid biosynthesis. This reaction introduces a second double bond into the aromatic ring system. This Dehalococcoides mccartyi (strain ATCC BAA-2266 / KCTC 15142 / 195) (Dehalococcoides ethenogenes (strain 195)) protein is Chorismate synthase.